A 58-amino-acid chain; its full sequence is Small ribosomal subunit protein uS14 (58 aa).

A disordered region spans residues 1-21; it reads MSESETEQTGEHASHRTGQTH. Over residues 9-21 the composition is skewed to basic and acidic residues; the sequence is TGEHASHRTGQTH. 4 residues coordinate Zn(2+): Cys-23, Cys-26, Cys-41, and Cys-44.

It belongs to the universal ribosomal protein uS14 family. Zinc-binding uS14 subfamily. As to quaternary structure, part of the 30S ribosomal subunit. The cofactor is Zn(2+).

Functionally, binds 16S rRNA, required for the assembly of 30S particles. This is Small ribosomal subunit protein uS14 from Haloquadratum walsbyi (strain DSM 16790 / HBSQ001).